Here is a 341-residue protein sequence, read N- to C-terminus: S-adenosylmethionine:tRNA ribosyltransferase-isomerase (341 aa).

The protein belongs to the QueA family. As to quaternary structure, monomer.

Its subcellular location is the cytoplasm. The catalysed reaction is 7-aminomethyl-7-carbaguanosine(34) in tRNA + S-adenosyl-L-methionine = epoxyqueuosine(34) in tRNA + adenine + L-methionine + 2 H(+). Its pathway is tRNA modification; tRNA-queuosine biosynthesis. Its function is as follows. Transfers and isomerizes the ribose moiety from AdoMet to the 7-aminomethyl group of 7-deazaguanine (preQ1-tRNA) to give epoxyqueuosine (oQ-tRNA). The chain is S-adenosylmethionine:tRNA ribosyltransferase-isomerase from Staphylococcus epidermidis (strain ATCC 12228 / FDA PCI 1200).